A 218-amino-acid chain; its full sequence is MPIILGYWNIRGLAHSIRLLLEYTDSSYEEKKYMMGDAPDYDRSQWLNEKFKLGLDFPNLPYLIDGTHKITQSNAILRYIARKHNLCGETEKEKIQEDILENQLMDNRMQLARLCYNPDFEKLKPEYLEGLPEMLKLYSQFLGKQPWFLGDKITFVDFIAYDVLERNQVFEPSCLDAFPNLKDFISRFEGLEKISAYMKSSRFLPRPVFTKMAVWGNK.

In terms of domain architecture, GST N-terminal spans 2 to 88 (PIILGYWNIR…YIARKHNLCG (87 aa)). 7 to 8 (YW) serves as a coordination point for glutathione. 2 positions are modified to phosphoserine: Ser27 and Ser44. Glutathione-binding positions include 43–46 (RSQW), Lys50, 59–60 (NL), and 72–73 (QS). A GST C-terminal domain is found at 90–208 (TEKEKIQEDI…KSSRFLPRPV (119 aa)). Tyr116 contacts substrate.

This sequence belongs to the GST superfamily. Mu family. As to quaternary structure, homodimer.

It is found in the cytoplasm. It carries out the reaction RX + glutathione = an S-substituted glutathione + a halide anion + H(+). The enzyme catalyses 11(S)-hydroxy-14(S),15(S)-epoxy-(5Z,8Z,12E)-eicosatrienoate + glutathione = (11S,15S)-dihydroxy-14(R)-S-glutathionyl-(5Z,8Z,12E)-eicosatrienoate. Conjugation of reduced glutathione to a wide number of exogenous and endogenous hydrophobic electrophiles. Participates in the formation of novel hepoxilin regioisomers. This is Glutathione S-transferase Mu 2 (GSTM2) from Pongo abelii (Sumatran orangutan).